The following is a 276-amino-acid chain: NAD-capped RNA hydrolase NudC (276 aa).

Arginine 82 contacts substrate. 2 residues coordinate Zn(2+): cysteine 112 and cysteine 115. Glutamate 125 serves as a coordination point for substrate. Cysteine 130 and cysteine 133 together coordinate Zn(2+). Tyrosine 138 is a substrate binding site. One can recognise a Nudix hydrolase domain in the interval 139–262; sequence PRISPSMIVL…SIARYLIDLY (124 aa). The a divalent metal cation site is built by alanine 172, glutamate 188, and glutamate 192. A Nudix box motif is present at residues 173-194; the sequence is GFAEPGESAEDCLVREVREEVA. Residue 206–213 coordinates substrate; that stretch reads QCWPFPHS. Position 233 (glutamate 233) interacts with a divalent metal cation. Alanine 255 is a substrate binding site.

It belongs to the Nudix hydrolase family. NudC subfamily. In terms of assembly, homodimer. Mg(2+) serves as cofactor. Requires Mn(2+) as cofactor. It depends on Zn(2+) as a cofactor.

The enzyme catalyses a 5'-end NAD(+)-phospho-ribonucleoside in mRNA + H2O = a 5'-end phospho-adenosine-phospho-ribonucleoside in mRNA + beta-nicotinamide D-ribonucleotide + 2 H(+). It carries out the reaction NAD(+) + H2O = beta-nicotinamide D-ribonucleotide + AMP + 2 H(+). The catalysed reaction is NADH + H2O = reduced beta-nicotinamide D-ribonucleotide + AMP + 2 H(+). Functionally, mRNA decapping enzyme that specifically removes the nicotinamide adenine dinucleotide (NAD) cap from a subset of mRNAs by hydrolyzing the diphosphate linkage to produce nicotinamide mononucleotide (NMN) and 5' monophosphate mRNA. The NAD-cap is present at the 5'-end of some mRNAs and stabilizes RNA against 5'-processing. Has preference for mRNAs with a 5'-end purine. Catalyzes the hydrolysis of a broad range of dinucleotide pyrophosphates. This chain is NAD-capped RNA hydrolase NudC, found in Pseudomonas putida (strain GB-1).